Consider the following 65-residue polypeptide: Large ribosomal subunit protein bL35 (65 aa).

This sequence belongs to the bacterial ribosomal protein bL35 family.

The polypeptide is Large ribosomal subunit protein bL35 (Buchnera aphidicola subsp. Cinara cedri (strain Cc)).